A 423-amino-acid polypeptide reads, in one-letter code: Deferrochelatase (423 aa).

Positions 1–35 form a signal peptide, tat-type signal; the sequence is MQYEDENGVNEPSRRRLLKGIGALALAGSCPVAHA. Residues 236 to 238, H329, 334 to 336, and R347 contribute to the heme b site; these read GTA and NPR.

Belongs to the DyP-type peroxidase family. EfeB subfamily. As to quaternary structure, homodimer. Part of a ferrous iron transporter composed of EfeU, EfeO and EfeB. The cofactor is heme b. Post-translationally, predicted to be exported by the Tat system. The position of the signal peptide cleavage has not been experimentally proven.

It localises to the periplasm. The catalysed reaction is heme b + 2 H(+) = protoporphyrin IX + Fe(2+). Involved in the recovery of exogenous heme iron. Extracts iron from heme while preserving the protoporphyrin ring intact. This chain is Deferrochelatase (efeB), found in Escherichia coli O6:K15:H31 (strain 536 / UPEC).